A 266-amino-acid chain; its full sequence is Diphthine synthase (266 aa).

S-adenosyl-L-methionine-binding positions include Leu9, Asp84, Val87, 112–113 (SI), Leu169, Ala210, and His235.

It belongs to the diphthine synthase family. Homodimer.

It carries out the reaction 2-[(3S)-amino-3-carboxypropyl]-L-histidyl-[translation elongation factor 2] + 3 S-adenosyl-L-methionine = diphthine-[translation elongation factor 2] + 3 S-adenosyl-L-homocysteine + 3 H(+). Its pathway is protein modification; peptidyl-diphthamide biosynthesis. Functionally, S-adenosyl-L-methionine-dependent methyltransferase that catalyzes the trimethylation of the amino group of the modified target histidine residue in translation elongation factor 2 (EF-2), to form an intermediate called diphthine. The three successive methylation reactions represent the second step of diphthamide biosynthesis. The protein is Diphthine synthase of Methanosarcina barkeri (strain Fusaro / DSM 804).